We begin with the raw amino-acid sequence, 33 residues long: uncharacterized protein (33 aa).

Its subcellular location is the cytoplasm. It localises to the nucleus. This is an uncharacterized protein from Schizosaccharomyces pombe (strain 972 / ATCC 24843) (Fission yeast).